A 451-amino-acid polypeptide reads, in one-letter code: Trigger factor (451 aa).

One can recognise a PPIase FKBP-type domain in the interval 162–243 (GDYAIIDITT…VQQSKERKLP (82 aa)).

The protein belongs to the FKBP-type PPIase family. Tig subfamily.

The protein localises to the cytoplasm. It carries out the reaction [protein]-peptidylproline (omega=180) = [protein]-peptidylproline (omega=0). Involved in protein export. Acts as a chaperone by maintaining the newly synthesized protein in an open conformation. Functions as a peptidyl-prolyl cis-trans isomerase. This chain is Trigger factor, found in Corynebacterium aurimucosum (strain ATCC 700975 / DSM 44827 / CIP 107346 / CN-1) (Corynebacterium nigricans).